A 44-amino-acid chain; its full sequence is NAEEERRDEPDETDVEVEKRFFPNVASVPGQVLKKIFCAISKKC.

A propeptide spanning residues 1-18 (NAEEERRDEPDETDVEVE) is cleaved from the precursor. Residues cysteine 38 and cysteine 44 are joined by a disulfide bond.

As to expression, expressed by the skin glands.

The protein localises to the secreted. Antimicrobial peptide. In Lithobates palustris (Pickerel frog), this protein is Brevinin-1PLa.